We begin with the raw amino-acid sequence, 91 residues long: MSIRIEIGERYVVTSDSFQFILHEKKRAESGKNAGQEWLAVVGYYPKLSQLVSGLMHHDILTGSAKSFADLNVQVEQLSKRCSEAFGSYGR.

To phage 186 CP83.

This is an uncharacterized protein from Escherichia phage P2 (Bacteriophage P2).